Consider the following 288-residue polypeptide: Diaminopimelate epimerase (288 aa).

Substrate contacts are provided by Asn-17, Gln-47, and Asn-67. Cys-76 acts as the Proton donor in catalysis. Substrate is bound by residues Gly-77–Asn-78, Asn-163, Asn-196, and Glu-214–Arg-215. Cys-223 serves as the catalytic Proton acceptor. Residue Gly-224 to Ser-225 coordinates substrate.

The protein belongs to the diaminopimelate epimerase family. Homodimer.

It localises to the cytoplasm. The enzyme catalyses (2S,6S)-2,6-diaminopimelate = meso-2,6-diaminopimelate. It functions in the pathway amino-acid biosynthesis; L-lysine biosynthesis via DAP pathway; DL-2,6-diaminopimelate from LL-2,6-diaminopimelate: step 1/1. Functionally, catalyzes the stereoinversion of LL-2,6-diaminopimelate (L,L-DAP) to meso-diaminopimelate (meso-DAP), a precursor of L-lysine and an essential component of the bacterial peptidoglycan. This is Diaminopimelate epimerase from Rhodopseudomonas palustris (strain BisB18).